We begin with the raw amino-acid sequence, 290 residues long: MSFMDQIPGGGNYPKLPVECLPNFPIQPSLTFRGRNDSHKLKNFISEIMLNMSMISWPNDASRIVYCRRHLLNPAAQWANDFVQEQGILEITFDTFIQGLYQHFYKPPDINKIFNAITQLSEAKLGIERLNQRFRKIWDRMPPDFMTEKAAIMTYTRLLTKETYNIVRMHKPETLKDAMEEAYQTTALTERFFPGFELDADGDTIIGATTHLQEEYDSDYDSEDNLTQNRYVHTVRTRRSYNKPMSNHRNRRNNNASREECIKNRLCFYCKKEGHRLNECRARKASSNRS.

Ser2 carries the post-translational modification N-acetylserine. The CCHC-type zinc-finger motif lies at 265–282 (RLCFYCKKEGHRLNECRA).

The protein localises to the cytoplasm. Functionally, capsid protein (CA) is the structural component of the virus-like particle (VLP), forming the shell that encapsulates the retrotransposons dimeric RNA genome. Its function is as follows. Nucleocapsid protein p9 (NC) forms the nucleocore that coats the retro-elements dimeric RNA. Binds these RNAs through its zinc fingers. Promotes primer tRNA(i)-Met annealing to the multipartite primer-binding site (PBS), dimerization of Ty3 RNA and initiation of reverse transcription. This chain is Transposon Ty3-I Gag polyprotein (TY3A-I), found in Saccharomyces cerevisiae (strain ATCC 204508 / S288c) (Baker's yeast).